The sequence spans 554 residues: Arginine--tRNA ligase (554 aa).

The short motif at 132–142 (ANPTGPLHIGH) is the 'HIGH' region element.

It belongs to the class-I aminoacyl-tRNA synthetase family. As to quaternary structure, monomer.

It localises to the cytoplasm. The catalysed reaction is tRNA(Arg) + L-arginine + ATP = L-arginyl-tRNA(Arg) + AMP + diphosphate. This chain is Arginine--tRNA ligase, found in Pseudarthrobacter chlorophenolicus (strain ATCC 700700 / DSM 12829 / CIP 107037 / JCM 12360 / KCTC 9906 / NCIMB 13794 / A6) (Arthrobacter chlorophenolicus).